Consider the following 250-residue polypeptide: UDP-2,3-diacylglucosamine hydrolase (250 aa).

Residues Asp-7, His-9, Asp-40, Asn-78, and His-113 each coordinate Mn(2+). 78–79 (NR) serves as a coordination point for substrate. Residues Asp-121, Ser-159, Thr-163, Lys-166, and His-194 each coordinate substrate. Mn(2+)-binding residues include His-194 and His-196.

The protein belongs to the LpxH family. Requires Mn(2+) as cofactor.

The protein resides in the cell inner membrane. It carries out the reaction UDP-2-N,3-O-bis[(3R)-3-hydroxytetradecanoyl]-alpha-D-glucosamine + H2O = 2-N,3-O-bis[(3R)-3-hydroxytetradecanoyl]-alpha-D-glucosaminyl 1-phosphate + UMP + 2 H(+). It participates in glycolipid biosynthesis; lipid IV(A) biosynthesis; lipid IV(A) from (3R)-3-hydroxytetradecanoyl-[acyl-carrier-protein] and UDP-N-acetyl-alpha-D-glucosamine: step 4/6. Functionally, hydrolyzes the pyrophosphate bond of UDP-2,3-diacylglucosamine to yield 2,3-diacylglucosamine 1-phosphate (lipid X) and UMP by catalyzing the attack of water at the alpha-P atom. Involved in the biosynthesis of lipid A, a phosphorylated glycolipid that anchors the lipopolysaccharide to the outer membrane of the cell. This chain is UDP-2,3-diacylglucosamine hydrolase, found in Pseudomonas fluorescens (strain ATCC BAA-477 / NRRL B-23932 / Pf-5).